Reading from the N-terminus, the 254-residue chain is 3-deoxy-manno-octulosonate cytidylyltransferase (254 aa).

It belongs to the KdsB family.

The protein localises to the cytoplasm. It carries out the reaction 3-deoxy-alpha-D-manno-oct-2-ulosonate + CTP = CMP-3-deoxy-beta-D-manno-octulosonate + diphosphate. It functions in the pathway nucleotide-sugar biosynthesis; CMP-3-deoxy-D-manno-octulosonate biosynthesis; CMP-3-deoxy-D-manno-octulosonate from 3-deoxy-D-manno-octulosonate and CTP: step 1/1. The protein operates within bacterial outer membrane biogenesis; lipopolysaccharide biosynthesis. Functionally, activates KDO (a required 8-carbon sugar) for incorporation into bacterial lipopolysaccharide in Gram-negative bacteria. This is 3-deoxy-manno-octulosonate cytidylyltransferase from Chlamydia pneumoniae (Chlamydophila pneumoniae).